We begin with the raw amino-acid sequence, 523 residues long: 2-isopropylmalate synthase (523 aa).

The Pyruvate carboxyltransferase domain maps to 5–267 (VIIFDTTLRD…ETGINAKEIH (263 aa)). Positions 14, 202, 204, and 238 each coordinate Mn(2+). Residues 392–523 (GLQQLVVHSD…KQARTELGGV (132 aa)) are regulatory domain.

This sequence belongs to the alpha-IPM synthase/homocitrate synthase family. LeuA type 1 subfamily. Homodimer. The cofactor is Mn(2+).

The protein resides in the cytoplasm. The catalysed reaction is 3-methyl-2-oxobutanoate + acetyl-CoA + H2O = (2S)-2-isopropylmalate + CoA + H(+). Its pathway is amino-acid biosynthesis; L-leucine biosynthesis; L-leucine from 3-methyl-2-oxobutanoate: step 1/4. Its function is as follows. Catalyzes the condensation of the acetyl group of acetyl-CoA with 3-methyl-2-oxobutanoate (2-ketoisovalerate) to form 3-carboxy-3-hydroxy-4-methylpentanoate (2-isopropylmalate). The chain is 2-isopropylmalate synthase from Shewanella loihica (strain ATCC BAA-1088 / PV-4).